The chain runs to 239 residues: Purine nucleoside phosphorylase DeoD-type (239 aa).

His-5 serves as a coordination point for a purine D-ribonucleoside. Phosphate is bound by residues Gly-21, Arg-25, Arg-44, and Arg-88–Ser-91. A purine D-ribonucleoside-binding positions include Glu-180–Glu-182 and Ser-204–Asp-205. Asp-205 functions as the Proton donor in the catalytic mechanism.

Belongs to the PNP/UDP phosphorylase family. In terms of assembly, homohexamer; trimer of homodimers.

It catalyses the reaction a purine D-ribonucleoside + phosphate = a purine nucleobase + alpha-D-ribose 1-phosphate. It carries out the reaction a purine 2'-deoxy-D-ribonucleoside + phosphate = a purine nucleobase + 2-deoxy-alpha-D-ribose 1-phosphate. Catalyzes the reversible phosphorolytic breakdown of the N-glycosidic bond in the beta-(deoxy)ribonucleoside molecules, with the formation of the corresponding free purine bases and pentose-1-phosphate. This is Purine nucleoside phosphorylase DeoD-type from Cronobacter sakazakii (strain ATCC BAA-894) (Enterobacter sakazakii).